Here is a 492-residue protein sequence, read N- to C-terminus: Ferruginol synthase (492 aa).

A helical transmembrane segment spans residues 1–21; the sequence is METIALLAALFFIALTCFLTS. At 22 to 492 the chain is on the cytoplasmic side; sequence GRRRNLPPGP…VPLKIIPLRP (471 aa). Heme is bound at residue Cys-436.

The protein belongs to the cytochrome P450 family. Heme serves as cofactor.

The protein resides in the endoplasmic reticulum membrane. The enzyme catalyses abieta-8,11,13-triene + reduced [NADPH--hemoprotein reductase] + O2 = ferruginol + oxidized [NADPH--hemoprotein reductase] + H2O + H(+). It participates in secondary metabolite biosynthesis; terpenoid biosynthesis. Functionally, cytochrome P450 enzyme (CYP) which catalyzes a unique two-electron oxidation cascade on abieta-8,11,13-triene to produce ferruginol, an intermediate in tanshinone biosynthesis. This Isodon rubescens (Rabdosia rubescens) protein is Ferruginol synthase.